Consider the following 613-residue polypeptide: MRMFSLQKMAMAFTLLFFACLCSFVSPDAQGDALFALRISLRALPNQLSDWNQNQVNPCTWSQVICDDKNFVTSLTLSDMNFSGTLSSRVGILENLKTLTLKGNGITGEIPEDFGNLTSLTSLDLEDNQLTGRIPSTIGNLKKLQFLTLSRNKLNGTIPESLTGLPNLLNLLLDSNSLSGQIPQSLFEIPKYNFTSNNLNCGGRQPHPCVSAVAHSGDSSKPKTGIIAGVVAGVTVVLFGILLFLFCKDRHKGYRRDVFVDVAGEVDRRIAFGQLKRFAWRELQLATDNFSEKNVLGQGGFGKVYKGVLPDNTKVAVKRLTDFESPGGDAAFQREVEMISVAVHRNLLRLIGFCTTQTERLLVYPFMQNLSLAHRLREIKAGDPVLDWETRKRIALGAARGFEYLHEHCNPKIIHRDVKAANVLLDEDFEAVVGDFGLAKLVDVRRTNVTTQVRGTMGHIAPEYLSTGKSSERTDVFGYGIMLLELVTGQRAIDFSRLEEEDDVLLLDHVKKLEREKRLGAIVDKNLDGEYIKEEVEMMIQVALLCTQGSPEDRPVMSEVVRMLEGEGLAERWEEWQNVEVTRRHEFERLQRRFDWGEDSMHNQDAIELSGGR.

A signal peptide spans 1-31 (MRMFSLQKMAMAFTLLFFACLCSFVSPDAQG). Topologically, residues 32–225 (DALFALRISL…SGDSSKPKTG (194 aa)) are extracellular. 2 N-linked (GlcNAc...) asparagine glycosylation sites follow: Asn-81 and Asn-116. LRR repeat units follow at residues 95-117 (NLKTLTLKGNGITGEIPEDFGNL), 119-141 (SLTSLDLEDNQLTGRIPSTIGNL), 143-166 (KLQFLTLSRNKLNGTIPESLTGLP), and 167-189 (NLLNLLLDSNSLSGQIPQSLFEI). An N-linked (GlcNAc...) asparagine glycan is attached at Asn-155. The N-linked (GlcNAc...) asparagine glycan is linked to Asn-193. A helical transmembrane segment spans residues 226 to 246 (IIAGVVAGVTVVLFGILLFLF). Residues 247-613 (CKDRHKGYRR…QDAIELSGGR (367 aa)) are Cytoplasmic-facing. Position 287 is a phosphothreonine (Thr-287). One can recognise a Protein kinase domain in the interval 290–569 (FSEKNVLGQG…VVRMLEGEGL (280 aa)). Position 296-304 (296-304 (LGQGGFGKV)) interacts with ATP. Phosphothreonine is present on Thr-313. An ATP-binding site is contributed by Lys-318. At Ser-371 the chain carries Phosphoserine. Thr-390 bears the Phosphothreonine mark. Residue Asp-417 is the Proton acceptor of the active site. Phosphothreonine occurs at positions 450, 451, and 456. Tyr-464 carries the post-translational modification Phosphotyrosine. A Phosphoserine modification is found at Ser-466. Position 467 is a phosphothreonine (Thr-467). Ser-471 is subject to Phosphoserine. Thr-547 carries the phosphothreonine modification.

This sequence belongs to the protein kinase superfamily. Ser/Thr protein kinase family.

The protein resides in the cell membrane. It carries out the reaction L-seryl-[protein] + ATP = O-phospho-L-seryl-[protein] + ADP + H(+). The enzyme catalyses L-threonyl-[protein] + ATP = O-phospho-L-threonyl-[protein] + ADP + H(+). This chain is Probable LRR receptor-like serine/threonine-protein kinase At5g10290, found in Arabidopsis thaliana (Mouse-ear cress).